A 217-amino-acid chain; its full sequence is E3 ubiquitin-protein ligase znrf2 (217 aa).

Disordered regions lie at residues Met1–Ala27 and Gln63–Thr111. Residue Gly2 is the site of N-myristoyl glycine attachment. The segment covering Arg68–Pro100 has biased composition (polar residues). An RING-type; atypical zinc finger spans residues Cys174–Pro215.

The protein localises to the endosome membrane. Its subcellular location is the lysosome membrane. It localises to the presynaptic cell membrane. The catalysed reaction is S-ubiquitinyl-[E2 ubiquitin-conjugating enzyme]-L-cysteine + [acceptor protein]-L-lysine = [E2 ubiquitin-conjugating enzyme]-L-cysteine + N(6)-ubiquitinyl-[acceptor protein]-L-lysine.. The protein operates within protein modification; protein ubiquitination. Functionally, may play a role in the establishment and maintenance of neuronal transmission and plasticity via its ubiquitin ligase activity. E3 ubiquitin ligases accept ubiquitin from an E2 ubiquitin-conjugating enzyme in the form of a thioester and then directly transfer the ubiquitin to targeted substrates. The sequence is that of E3 ubiquitin-protein ligase znrf2 (znrf2) from Danio rerio (Zebrafish).